A 385-amino-acid polypeptide reads, in one-letter code: MLLPRRCWGPWLAGRRPRCSCQSPAGFSGKDRRSSRVREKPPWRVLFFGTDHFAREALRALHAARDNKEEKLIEKLEVVTVPSISPKGLPVKQYAIQSQLPVYEWPDMGSGEYDVGVVASFGRLLSEALILKFPYGILNVHPSCLPRWRGPAPIIHTVLHGDTVTGVTIMQVRPKRFDVGPILKQETVAVPPKSTSKELEAVLSKLGANMLISVLKNLPESLNNGRPQPAEGVTYAPKVSAGTSCVKWEEQTSEQVLRLHLAIGDIVPLQTLWMENTVKLLDLVEVNNSILADPKVMGQTVTPGSVVYHRPSQMLLVHCKDGWIGVRSIMHKKTLTATDFYNGYLHAWYQKNSHAYPSQCKFQTLRLPTKTQQKTKLLLCSALSS.

This sequence belongs to the Fmt family.

It localises to the mitochondrion. It carries out the reaction L-methionyl-tRNA(fMet) + (6R)-10-formyltetrahydrofolate = N-formyl-L-methionyl-tRNA(fMet) + (6S)-5,6,7,8-tetrahydrofolate + H(+). Its function is as follows. Methionyl-tRNA formyltransferase that formylates methionyl-tRNA in mitochondria and is crucial for translation initiation. The chain is Methionyl-tRNA formyltransferase, mitochondrial (Mtfmt) from Rattus norvegicus (Rat).